A 620-amino-acid polypeptide reads, in one-letter code: Long-chain fatty acid transport protein 2 (620 aa).

Residues 1 to 4 (MLPV) are Lumenal-facing. Residues 5-27 (LYTGLAGLLLLPLLLTCCCPYLL) traverse the membrane as a helical segment. Residues 28 to 106 (QDVRFFLQLA…DHLGLRQGDC (79 aa)) are Cytoplasmic-facing. A helical transmembrane segment spans residues 107-127 (VALFMGNEPAYVWLWLGLLKL). Residues 128-267 (GCPMACLNYN…DVIYTTMPLY (140 aa)) lie on the Lumenal side of the membrane. 222 to 233 (YIYTSGTTGLPK) provides a ligand contact to AMP. The helical transmembrane segment at 268–288 (HSAALMIGLHGCIVVGATFAL) threads the bilayer. The Cytoplasmic portion of the chain corresponds to 289 to 620 (RSKFSASQFW…NAIIDKTLKL (332 aa)). N6-acetyllysine is present on Lys291. Residue Thr577 is modified to Phosphothreonine.

This sequence belongs to the ATP-dependent AMP-binding enzyme family. In terms of tissue distribution, liver and kidney (at protein level).

The protein localises to the endoplasmic reticulum membrane. The protein resides in the peroxisome membrane. Its subcellular location is the cell membrane. It localises to the microsome. It catalyses the reaction a fatty acid(in) = a fatty acid(out). The enzyme catalyses (9Z)-octadecenoate(out) = (9Z)-octadecenoate(in). It carries out the reaction a long-chain fatty acid + ATP + CoA = a long-chain fatty acyl-CoA + AMP + diphosphate. The catalysed reaction is (5Z,8Z,11Z,14Z)-eicosatetraenoate + ATP + CoA = (5Z,8Z,11Z,14Z)-eicosatetraenoyl-CoA + AMP + diphosphate. It catalyses the reaction (9Z,12Z,15Z)-octadecatrienoate + ATP + CoA = (9Z,12Z,15Z)-octadecatrienoyl-CoA + AMP + diphosphate. The enzyme catalyses hexadecanoate + ATP + CoA = hexadecanoyl-CoA + AMP + diphosphate. It carries out the reaction (9Z)-octadecenoate + ATP + CoA = (9Z)-octadecenoyl-CoA + AMP + diphosphate. The catalysed reaction is 2,6,10,14-tetramethylpentadecanoate + ATP + CoA = pristanoyl-CoA + AMP + diphosphate. It catalyses the reaction (E)-hexadec-2-enoate + ATP + CoA = (2E)-hexadecenoyl-CoA + AMP + diphosphate. The enzyme catalyses 3,7,11,15-tetramethylhexadecanoate + ATP + CoA = phytanoyl-CoA + AMP + diphosphate. It carries out the reaction a very long-chain fatty acid + ATP + CoA = a very long-chain fatty acyl-CoA + AMP + diphosphate. The catalysed reaction is tetracosanoate + ATP + CoA = tetracosanoyl-CoA + AMP + diphosphate. It catalyses the reaction (4Z,7Z,10Z,13Z,16Z,19Z)-docosahexaenoate + ATP + CoA = (4Z,7Z,10Z,13Z,16Z,19Z)-docosahexaenoyl-CoA + AMP + diphosphate. The enzyme catalyses (25R)-3alpha,7alpha,12alpha-trihydroxy-5beta-cholestan-26-oate + ATP + CoA = (25R)-3alpha,7alpha,12alpha-trihydroxy-5beta-cholestan-26-oyl-CoA + AMP + diphosphate. In terms of biological role, mediates the import of long-chain fatty acids (LCFA) into the cell by facilitating their transport across cell membranes, playing an important role in hepatic fatty acid uptake. Also functions as an acyl-CoA ligase catalyzing the ATP-dependent formation of fatty acyl-CoA using LCFA and very-long-chain fatty acids (VLCFA) as substrates, which prevents fatty acid efflux from cells and might drive more fatty acid uptake. Plays a pivotal role in regulating available LCFA substrates from exogenous sources in tissues undergoing high levels of beta-oxidation or triglyceride synthesis. Can also activate branched-chain fatty acids such as phytanic acid and pristanic acid. May contribute to the synthesis of sphingosine-1-phosphate. Does not activate C24 bile acids, cholate and chenodeoxycholate. In vitro, activates 3-alpha,7-alpha,12-alpha-trihydroxy-5-beta-cholestanate (THCA), the C27 precursor of cholic acid deriving from the de novo synthesis from cholesterol. However, it is not critical for THCA activation and bile synthesis in vivo. This chain is Long-chain fatty acid transport protein 2 (Slc27a2), found in Rattus norvegicus (Rat).